We begin with the raw amino-acid sequence, 313 residues long: Protoheme IX farnesyltransferase (313 aa).

Helical transmembrane passes span 23–43 (ILAY…VTTI), 56–76 (PLLI…ANTL), 107–127 (LIFG…TANL), 128–148 (LSGL…TLVL), 155–175 (NVVW…SAVT), 182–202 (ALVM…ALAM), 243–263 (LALA…VWFL), and 291–311 (YLAV…PTLF).

This sequence belongs to the UbiA prenyltransferase family. Protoheme IX farnesyltransferase subfamily.

The protein localises to the cell membrane. It carries out the reaction heme b + (2E,6E)-farnesyl diphosphate + H2O = Fe(II)-heme o + diphosphate. The protein operates within porphyrin-containing compound metabolism; heme O biosynthesis; heme O from protoheme: step 1/1. Converts heme B (protoheme IX) to heme O by substitution of the vinyl group on carbon 2 of heme B porphyrin ring with a hydroxyethyl farnesyl side group. This chain is Protoheme IX farnesyltransferase, found in Mycobacteroides abscessus (strain ATCC 19977 / DSM 44196 / CCUG 20993 / CIP 104536 / JCM 13569 / NCTC 13031 / TMC 1543 / L948) (Mycobacterium abscessus).